The chain runs to 199 residues: Large ribosomal subunit protein bL9 (199 aa).

A compositionally biased stretch (basic and acidic residues) spans 149–166 (AEAERINRGEDINSRQED). Residues 149–199 (AEAERINRGEDINSRQEDQDAAAEAIAAAGEFFDPEAQDETPETEAASEQQ) are disordered. The segment covering 181–191 (FDPEAQDETPE) has biased composition (acidic residues).

It belongs to the bacterial ribosomal protein bL9 family.

Binds to the 23S rRNA. The protein is Large ribosomal subunit protein bL9 of Afipia carboxidovorans (strain ATCC 49405 / DSM 1227 / KCTC 32145 / OM5) (Oligotropha carboxidovorans).